A 71-amino-acid chain; its full sequence is Phosphatidylinositol N-acetylglucosaminyltransferase subunit Y (71 aa).

Position 1 (methionine 1) is a topological domain, cytoplasmic. A helical transmembrane segment spans residues 2–21; the sequence is FFSLPVLTVLIPLVSLTGLL. At 22-44 the chain is on the lumenal side; that stretch reads YSASVEEDFPNGCTSTASLCFYS. Residues 45-65 traverse the membrane as a helical segment; sequence LLLPITLPVYVFFHLWTWMGL. The Cytoplasmic segment spans residues 66-71; sequence KLFRHN.

As to quaternary structure, component of the glycosylphosphatidylinositol-N-acetylglucosaminyltransferase (GPI-GnT) complex composed at least by PIGA, PIGC, PIGH, PIGP, PIGQ, PIGY and DPM2.

Its subcellular location is the endoplasmic reticulum membrane. It participates in glycolipid biosynthesis; glycosylphosphatidylinositol-anchor biosynthesis. In terms of biological role, part of the glycosylphosphatidylinositol-N-acetylglucosaminyltransferase (GPI-GnT) complex that catalyzes the transfer of N-acetylglucosamine from UDP-N-acetylglucosamine to phosphatidylinositol and participates in the first step of GPI biosynthesis. May act by regulating the catalytic subunit PIGA. This is Phosphatidylinositol N-acetylglucosaminyltransferase subunit Y from Xenopus tropicalis (Western clawed frog).